A 607-amino-acid polypeptide reads, in one-letter code: Albumin (607 aa).

The N-terminal stretch at 1-18 (MKWVTFVSLLFLFSSAYS) is a signal peptide. The propeptide occupies 19-24 (RGVLRR). Albumin domains lie at 19–209 (RGVL…DALK), 210–402 (ERIL…QFTP), and 403–600 (LVEE…KLVA). A Cu cation-binding site is contributed by histidine 27. Phosphoserine is present on serine 29. Glutamate 30 and aspartate 37 together coordinate Ca(2+). Cysteine 77 and cysteine 86 are disulfide-bonded. Phosphoserine occurs at positions 82 and 89. Histidine 91 contributes to the Zn(2+) binding site. Disulfide bonds link cysteine 99–cysteine 115, cysteine 114–cysteine 125, cysteine 147–cysteine 192, cysteine 191–cysteine 200, cysteine 223–cysteine 269, and cysteine 268–cysteine 276. Position 107 is a phosphothreonine (threonine 107). Glutamate 267 provides a ligand contact to Ca(2+). Positions 270 and 272 each coordinate Zn(2+). Positions 272, 275, 278, and 282 each coordinate Ca(2+). Intrachain disulfides connect cysteine 288–cysteine 302, cysteine 301–cysteine 312, cysteine 339–cysteine 384, cysteine 383–cysteine 392, cysteine 415–cysteine 461, cysteine 460–cysteine 471, cysteine 484–cysteine 500, and cysteine 499–cysteine 510. At serine 442 the chain carries Phosphoserine. Threonine 443 and threonine 445 each carry phosphothreonine. At serine 512 the chain carries Phosphoserine. 2 disulfide bridges follow: cysteine 537–cysteine 582 and cysteine 581–cysteine 590. Residue lysine 557 is modified to N6-methyllysine. Phosphothreonine is present on threonine 569. Residue lysine 587 is modified to N6-succinyllysine.

This sequence belongs to the ALB/AFP/VDB family. Interacts with FCGRT; this interaction regulates ALB homeostasis. Interacts with TASOR. In plasma, occurs in a covalently-linked complex with chromophore-bound alpha-1-microglobulin; this interaction does not prevent fatty acid binding to ALB. In terms of processing, phosphorylated by FAM20C in the extracellular medium. As to expression, plasma.

It localises to the secreted. Functionally, binds water, Ca(2+), Na(+), K(+), fatty acids, hormones, bilirubin and drugs. Its main function is the regulation of the colloidal osmotic pressure of blood. Major zinc transporter in plasma, typically binds about 80% of all plasma zinc. Major calcium and magnesium transporter in plasma, binds approximately 45% of circulating calcium and magnesium in plasma. Potentially has more than two calcium-binding sites and might additionally bind calcium in a non-specific manner. The shared binding site between zinc and calcium at residue Asp-272 suggests a crosstalk between zinc and calcium transport in the blood. The rank order of affinity is zinc &gt; calcium &gt; magnesium. Binds to the bacterial siderophore enterobactin and inhibits enterobactin-mediated iron uptake of E.coli from ferric transferrin, and may thereby limit the utilization of iron and growth of enteric bacteria such as E.coli. Does not prevent iron uptake by the bacterial siderophore aerobactin. The sequence is that of Albumin (ALB) from Equus caballus (Horse).